The chain runs to 467 residues: Asparagine--tRNA ligase (467 aa).

It belongs to the class-II aminoacyl-tRNA synthetase family. As to quaternary structure, homodimer.

It localises to the cytoplasm. It catalyses the reaction tRNA(Asn) + L-asparagine + ATP = L-asparaginyl-tRNA(Asn) + AMP + diphosphate + H(+). The polypeptide is Asparagine--tRNA ligase (Histophilus somni (strain 129Pt) (Haemophilus somnus)).